The chain runs to 868 residues: LPS-assembly protein LptD (868 aa).

The first 24 residues, 1 to 24 (MLKGIHKYLLMCFGTVLFTVQANA), serve as a signal peptide directing secretion.

Belongs to the LptD family. Component of the lipopolysaccharide transport and assembly complex. Interacts with LptE and LptA.

Its subcellular location is the cell outer membrane. Its function is as follows. Together with LptE, is involved in the assembly of lipopolysaccharide (LPS) at the surface of the outer membrane. This Francisella tularensis subsp. tularensis (strain FSC 198) protein is LPS-assembly protein LptD.